A 62-amino-acid polypeptide reads, in one-letter code: Large ribosomal subunit protein eL37 (62 aa).

Residues cysteine 20, cysteine 23, cysteine 35, and cysteine 38 each coordinate Zn(2+). The C4-type zinc-finger motif lies at 20 to 38 (CRRCGRHAFNVAKGYCAAC).

This sequence belongs to the eukaryotic ribosomal protein eL37 family. It depends on Zn(2+) as a cofactor.

Its function is as follows. Binds to the 23S rRNA. This Staphylothermus marinus (strain ATCC 43588 / DSM 3639 / JCM 9404 / F1) protein is Large ribosomal subunit protein eL37.